We begin with the raw amino-acid sequence, 306 residues long: Pantothenate kinase (306 aa).

Residue 91–98 (GSVAVGKS) participates in ATP binding.

This sequence belongs to the prokaryotic pantothenate kinase family.

The protein localises to the cytoplasm. The enzyme catalyses (R)-pantothenate + ATP = (R)-4'-phosphopantothenate + ADP + H(+). Its pathway is cofactor biosynthesis; coenzyme A biosynthesis; CoA from (R)-pantothenate: step 1/5. In Streptococcus pneumoniae (strain JJA), this protein is Pantothenate kinase.